Here is a 138-residue protein sequence, read N- to C-terminus: MLQPSRRKYRKEQKGRNTGLASRGTHVSFGEFGLKATGRGRLTARQIEAARRAINRHIKRGGRIWIRIFPDKPISQKPAEVRMGNGKGNPEYWVAEIQPGKVLYEMEGVSEELAREAFRLAAAKLPISTTFVARHIGA.

The segment covering 1 to 13 has biased composition (basic residues); the sequence is MLQPSRRKYRKEQ. Residues 1 to 24 form a disordered region; it reads MLQPSRRKYRKEQKGRNTGLASRG.

It belongs to the universal ribosomal protein uL16 family. Part of the 50S ribosomal subunit.

In terms of biological role, binds 23S rRNA and is also seen to make contacts with the A and possibly P site tRNAs. In Bordetella bronchiseptica (strain ATCC BAA-588 / NCTC 13252 / RB50) (Alcaligenes bronchisepticus), this protein is Large ribosomal subunit protein uL16.